The sequence spans 373 residues: Forkhead box protein F1 (373 aa).

The disordered stretch occupies residues 1–51; that stretch reads MTAEIQQPPSQPPAQSSPMSAATDKHGGQPSVMESANCATKTKKTNAGIRR. The segment covering 13 to 22 has biased composition (low complexity); it reads PAQSSPMSAA. A DNA-binding region (fork-head) is located at residues 54–148; that stretch reads KPPYSYIALI…EEGSFRRRPR (95 aa). 2 disordered regions span residues 236–255 and 283–306; these read GSSGGDYSHHDSGSPLLGGG and QPLSPCNSAANPLSSSLSSHSLDQ. Residues 286 to 306 are compositionally biased toward low complexity; the sequence is SPCNSAANPLSSSLSSHSLDQ.

The protein localises to the nucleus. In terms of biological role, probable transcription factor. Required for smooth muscle (visceral mesoderm) differentiation during gut development. Also required for normal proliferation of the lateral plate mesoderm. Acts as a downstream mediator of bmp4-signaling. In Xenopus tropicalis (Western clawed frog), this protein is Forkhead box protein F1.